Here is a 143-residue protein sequence, read N- to C-terminus: Interleukin-4 (143 aa).

Residues 1 to 19 (MGLSPQLAAVLLCLLVCTG) form the signal peptide. Cystine bridges form between Cys-48–Cys-88 and Cys-70–Cys-115. N-linked (GlcNAc...) asparagine glycosylation is found at Asn-62 and Asn-91.

This sequence belongs to the IL-4/IL-13 family.

It localises to the secreted. Its function is as follows. Participates in at least several B-cell activation processes as well as of other cell types. It is a costimulator of DNA-synthesis. It induces the expression of class II MHC molecules on resting B-cells. It enhances both secretion and cell surface expression of IgE and IgG1. It also regulates the expression of the low affinity Fc receptor for IgE (CD23) on both lymphocytes and monocytes. Positively regulates IL31RA expression in macrophages. Stimulates autophagy in dendritic cells by interfering with mTORC1 signaling and through the induction of RUFY4. The chain is Interleukin-4 (IL4) from Meriones unguiculatus (Mongolian jird).